The primary structure comprises 135 residues: MADITVVNDTGELYNVINQKKSEGYLESELTIISKSKLHLNDLHDSEISLISTSGTFSDRMTKLLTGEDGEHAVLSRYNLAPDELEKYKQLILDDKMLVVAVRDKSSHKEVQEHNSAYEEIDITHFAEASKGPKA.

This sequence belongs to the UPF0355 family.

The chain is UPF0355 protein SAV0387 from Staphylococcus aureus (strain Mu50 / ATCC 700699).